The chain runs to 853 residues: DNA mismatch repair protein MutS (853 aa).

An ATP-binding site is contributed by 613 to 620 (GPNMGGKS).

This sequence belongs to the DNA mismatch repair MutS family.

Its function is as follows. This protein is involved in the repair of mismatches in DNA. It is possible that it carries out the mismatch recognition step. This protein has a weak ATPase activity. The sequence is that of DNA mismatch repair protein MutS from Vibrio atlanticus (strain LGP32) (Vibrio splendidus (strain Mel32)).